Here is a 129-residue protein sequence, read N- to C-terminus: Mitochondrial pyruvate carrier 2 (129 aa).

Residues 2–22 (STSSVRFAFRRFWQSETGPKT) lie on the Mitochondrial matrix side of the membrane. A helical membrane pass occupies residues 23-39 (VHFWAPTLKWGLVFAGF). At 40 to 54 (SDMKRPVEKISGAQN) the chain is on the mitochondrial intermembrane side. The helical transmembrane segment at 55 to 71 (LSLLSTALIWTRWSFVI) threads the bilayer. The Mitochondrial matrix portion of the chain corresponds to 72 to 74 (KPR). A helical transmembrane segment spans residues 75-91 (NILLASVNSFLCLTAGY). Over 92 to 129 (QLGRIANYRIRNGDSISQLCSYILSGADESKKEITTGR) the chain is Mitochondrial intermembrane.

This sequence belongs to the mitochondrial pyruvate carrier (MPC) (TC 2.A.105) family. The functional 150 kDa pyruvate import complex is a heteromer of MPC1 and either MPC2 or MPC3.

It localises to the mitochondrion. Its subcellular location is the mitochondrion inner membrane. It carries out the reaction pyruvate(out) + H(+)(out) = pyruvate(in) + H(+)(in). In terms of biological role, mediates the uptake of pyruvate into mitochondria. In Saccharomyces cerevisiae (strain ATCC 204508 / S288c) (Baker's yeast), this protein is Mitochondrial pyruvate carrier 2.